Reading from the N-terminus, the 378-residue chain is MTQKLHIALLFGGNSSEHDVSKRSAHNIYDALDKEKYDVSLFMFTKDGILLGNEDSQKIFDGEPEDQVVAEAYQKMDMSSPLAPIMALNEQKEIDFFFPVIHGNLGEDGTIQGLFKLLNKPYVGSNIAASAMSFDKDLTKKIISQAGIRNTPYVVVTPENQADYSWGRIEEKLGNLTFVKPAKQGSSVGIHRVTNAEEYEKALDDAFKYDYKILVEQGIANPQEIEISILGNEHPIASKLGAVRVPKDDPFYDYENKFVDASGVVFELPVKLPQYLVDEITDMALKAYKALGMKGMARIDFLVDSNNVPYLGEPNTLPGFTNISLYPQMWEVSGISYSDLIDRLIQLGLQEFERNSKIKYDFRKLGTERVGQKKYNED.

An ATP-grasp domain is found at 140–346 (KKIISQAGIR…YSDLIDRLIQ (207 aa)). 170–225 (EEKLGNLTFVKPAKQGSSVGIHRVTNAEEYEKALDDAFKYDYKILVEQGIANPQEI) provides a ligand contact to ATP. Residues D300, E313, and N315 each contribute to the Mg(2+) site.

This sequence belongs to the D-alanine--D-alanine ligase family. It depends on Mg(2+) as a cofactor. Mn(2+) serves as cofactor.

The protein resides in the cytoplasm. It carries out the reaction 2 D-alanine + ATP = D-alanyl-D-alanine + ADP + phosphate + H(+). It functions in the pathway cell wall biogenesis; peptidoglycan biosynthesis. Cell wall formation. This Limosilactobacillus reuteri (strain DSM 20016) (Lactobacillus reuteri) protein is D-alanine--D-alanine ligase.